Reading from the N-terminus, the 445-residue chain is MSNRKYFGTDGIRGRVGDAPITPDFVLKLGWAAGKVLARHGSRKIIIGKDTRISGYMLESALEAGLAAAGLSALFTGPMPTPAVAYLTRTFRAEAGIVISASHNPFYDNGIKFFSIDGTKLPDAVEEAIEAEMEKEISCVDSAELGKASRIVDAAGRYIEFCKATFPNELSLSELKIVVDCANGATYHIAPNVLRELGANVIAIGCEPNGVNINAEVGATDVRALQARVLAEKADLGIAFDGDGDRVIMVDHEGNKVDGDQIMYIIAREGLRQGQLRGGAVGTLMSNMGLELALKQLGIPFARAKVGDRYVLEKMQEKGWRIGAENSGHVILLDKTTTGDGIVAGLQVLAAMARNHMSLHDLCSGMKMFPQILVNVRYTAGSGDPLEHESVKAVTAEVEAALGSRGRVLLRKSGTEPLIRVMVEGEDEEQVTEFAHRIADAVKAV.

The active-site Phosphoserine intermediate is Ser-102. Mg(2+)-binding residues include Ser-102, Asp-241, Asp-243, and Asp-245. Phosphoserine is present on Ser-102.

This sequence belongs to the phosphohexose mutase family. The cofactor is Mg(2+). Activated by phosphorylation.

The enzyme catalyses alpha-D-glucosamine 1-phosphate = D-glucosamine 6-phosphate. In terms of biological role, catalyzes the conversion of glucosamine-6-phosphate to glucosamine-1-phosphate. This chain is Phosphoglucosamine mutase, found in Escherichia fergusonii (strain ATCC 35469 / DSM 13698 / CCUG 18766 / IAM 14443 / JCM 21226 / LMG 7866 / NBRC 102419 / NCTC 12128 / CDC 0568-73).